A 607-amino-acid chain; its full sequence is Fatty acid amide hydrolase (607 aa).

Residues Lys204 and Ser280 each act as charge relay system in the active site. Residue 301-304 (GGGS) participates in substrate binding. The active-site Acyl-ester intermediate is Ser304.

The protein belongs to the amidase family. As to quaternary structure, forms homodimers.

It localises to the endoplasmic reticulum membrane. The protein resides in the cell membrane. It catalyses the reaction N-(9Z,12Z-octadecadienoyl)-ethanolamine + H2O = ethanolamine + (9Z,12Z)-octadecadienoate. In terms of biological role, catalyzes the hydrolysis of bioactive endogenous fatty acid amides to their corresponding acids. The hydrolysis of endogenous amidated lipids terminates their participation as lipid mediators in various signaling systems. Converts a wide range of N-acylethanolamines (NAEs) to their corresponding free fatty acids and ethanolamine. This chain is Fatty acid amide hydrolase, found in Medicago truncatula (Barrel medic).